Reading from the N-terminus, the 256-residue chain is Enoyl-[acyl-carrier-protein] reductase [NADH] FabI (256 aa).

Residues glycine 13, 19 to 20, 66 to 67, and isoleucine 94 contribute to the NAD(+) site; these read SI and DV. Alanine 97 is a binding site for substrate. Catalysis depends on proton acceptor residues tyrosine 147 and tyrosine 157. Residues lysine 164 and 193-197 contribute to the NAD(+) site; that span reads IRTLS.

Belongs to the short-chain dehydrogenases/reductases (SDR) family. FabI subfamily. As to quaternary structure, homotetramer.

The catalysed reaction is a 2,3-saturated acyl-[ACP] + NAD(+) = a (2E)-enoyl-[ACP] + NADH + H(+). It participates in lipid metabolism; fatty acid biosynthesis. Functionally, catalyzes the reduction of a carbon-carbon double bond in an enoyl moiety that is covalently linked to an acyl carrier protein (ACP). Involved in the elongation cycle of fatty acid which are used in the lipid metabolism. In Bacillus cereus (strain ATCC 14579 / DSM 31 / CCUG 7414 / JCM 2152 / NBRC 15305 / NCIMB 9373 / NCTC 2599 / NRRL B-3711), this protein is Enoyl-[acyl-carrier-protein] reductase [NADH] FabI (fabI).